A 106-amino-acid polypeptide reads, in one-letter code: Protein U4 (106 aa).

A helical membrane pass occupies residues 5–25 (FFISIILFVVLLNPSLIINMV).

Belongs to the nanovirus U4 protein family.

Its subcellular location is the membrane. The chain is Protein U4 (DNA-U4) from Cicer arietinum (Chickpea).